A 475-amino-acid polypeptide reads, in one-letter code: Aspartyl/glutamyl-tRNA(Asn/Gln) amidotransferase subunit B (475 aa).

It belongs to the GatB/GatE family. GatB subfamily. In terms of assembly, heterotrimer of A, B and C subunits.

The catalysed reaction is L-glutamyl-tRNA(Gln) + L-glutamine + ATP + H2O = L-glutaminyl-tRNA(Gln) + L-glutamate + ADP + phosphate + H(+). The enzyme catalyses L-aspartyl-tRNA(Asn) + L-glutamine + ATP + H2O = L-asparaginyl-tRNA(Asn) + L-glutamate + ADP + phosphate + 2 H(+). Allows the formation of correctly charged Asn-tRNA(Asn) or Gln-tRNA(Gln) through the transamidation of misacylated Asp-tRNA(Asn) or Glu-tRNA(Gln) in organisms which lack either or both of asparaginyl-tRNA or glutaminyl-tRNA synthetases. The reaction takes place in the presence of glutamine and ATP through an activated phospho-Asp-tRNA(Asn) or phospho-Glu-tRNA(Gln). This chain is Aspartyl/glutamyl-tRNA(Asn/Gln) amidotransferase subunit B, found in Bacillus thuringiensis subsp. konkukian (strain 97-27).